The chain runs to 1073 residues: Probable inorganic carbon transporter subunit DabA 2 (1073 aa).

Residues 1 to 20 (MSSGNTSSQNHSPVNNQPTR) show a composition bias toward polar residues. Residues 1 to 35 (MSSGNTSSQNHSPVNNQPTRLKSPLPALHKDTQPN) are disordered. Zn(2+) contacts are provided by Cys-535, Asp-537, His-721, and Cys-736.

This sequence belongs to the inorganic carbon transporter (TC 9.A.2) DabA family. Forms a complex with DabB. It depends on Zn(2+) as a cofactor.

The protein localises to the cell inner membrane. Its function is as follows. Part of an energy-coupled inorganic carbon pump. The sequence is that of Probable inorganic carbon transporter subunit DabA 2 from Rhodopirellula baltica (strain DSM 10527 / NCIMB 13988 / SH1).